The primary structure comprises 80 residues: Conotoxin MaIr193 (80 aa).

Residues 1 to 22 (MKLTCMMIVAVLFLTAWTLVTA) form the signal peptide. Residues 23 to 51 (DGTRDGLKNRFPKARLEMKNSEAPRSRGR) constitute a propeptide that is removed on maturation. Disulfide bonds link C52/C69, C59/C73, and C68/C77. Residue P64 is modified to 4-hydroxyproline.

It belongs to the conotoxin O1 superfamily. As to expression, expressed by the venom duct.

It is found in the secreted. The protein is Conotoxin MaIr193 of Conus marmoreus (Marble cone).